A 221-amino-acid polypeptide reads, in one-letter code: MLTGKLVTFEGPDGAGKTSALNAIVAKLQPQLGDRLVVTREPGGNQISEAIRKIILDRHNTAMDDRTEALLYAAARRQHIVQTIQPALQNDQLVLCDRYIDSSVAYQGAGRGIGEQAVYDMNQFATAGLTADLTLYFDVDAAVGLNRIQQHRQNEINRLDVEALSFHHRVQAAYLRLLADHPDRIKRVDASQPLDQVVTQALEIMASQLPTYVASKGGEDQ.

11 to 18 (GPDGAGKT) is a binding site for ATP.

The protein belongs to the thymidylate kinase family.

It carries out the reaction dTMP + ATP = dTDP + ADP. In terms of biological role, phosphorylation of dTMP to form dTDP in both de novo and salvage pathways of dTTP synthesis. This is Thymidylate kinase from Lactiplantibacillus plantarum (strain ATCC BAA-793 / NCIMB 8826 / WCFS1) (Lactobacillus plantarum).